The following is a 196-amino-acid chain: UMP-CMP kinase (196 aa).

13–18 (GAGKGT) contacts ATP. The segment at 33–63 (SAGDLLRDERKRPGSQYGELIENYIKEGEIV) is NMP. A ribonucleoside 5'-phosphate contacts are provided by residues Arg-39, 61 to 63 (EIV), and 93 to 96 (GFPR). A CMP-binding site is contributed by Asn-100. Residues 133 to 143 (ERGKSSGRSDD) form an LID region. Arg-134 contacts ATP. Residues Arg-140 and Arg-151 each coordinate a ribonucleoside 5'-phosphate. Lys-179 provides a ligand contact to ATP.

It belongs to the adenylate kinase family. UMP-CMP kinase subfamily. As to quaternary structure, monomer. The cofactor is Mg(2+).

It localises to the nucleus. Its subcellular location is the cytoplasm. The enzyme catalyses CMP + ATP = CDP + ADP. It carries out the reaction dCMP + ATP = dCDP + ADP. It catalyses the reaction UMP + ATP = UDP + ADP. The catalysed reaction is a 2'-deoxyribonucleoside 5'-diphosphate + ATP = a 2'-deoxyribonucleoside 5'-triphosphate + ADP. The enzyme catalyses a ribonucleoside 5'-diphosphate + ATP = a ribonucleoside 5'-triphosphate + ADP. Its function is as follows. Catalyzes the phosphorylation of pyrimidine nucleoside monophosphates at the expense of ATP. Plays an important role in de novo pyrimidine nucleotide biosynthesis. Has preference for UMP and CMP as phosphate acceptors. Also displays broad nucleoside diphosphate kinase activity. In Gallus gallus (Chicken), this protein is UMP-CMP kinase (CMPK).